The following is a 229-amino-acid chain: Probable GTP-binding protein EngB (229 aa).

Residues 53 to 228 (DLPEVAFAGR…RAEIVRLCID (176 aa)) form the EngB-type G domain. Residues 61–68 (GRSNVGKS), 88–92 (GRTRE), 106–109 (DLPG), 173–176 (TKAD), and 207–209 (TSS) each bind GTP. Mg(2+)-binding residues include Ser68 and Thr90.

This sequence belongs to the TRAFAC class TrmE-Era-EngA-EngB-Septin-like GTPase superfamily. EngB GTPase family. Requires Mg(2+) as cofactor.

Necessary for normal cell division and for the maintenance of normal septation. This is Probable GTP-binding protein EngB from Caulobacter vibrioides (strain NA1000 / CB15N) (Caulobacter crescentus).